The following is a 204-amino-acid chain: Probable nicotinate-nucleotide adenylyltransferase (204 aa).

Belongs to the NadD family.

The catalysed reaction is nicotinate beta-D-ribonucleotide + ATP + H(+) = deamido-NAD(+) + diphosphate. Its pathway is cofactor biosynthesis; NAD(+) biosynthesis; deamido-NAD(+) from nicotinate D-ribonucleotide: step 1/1. Functionally, catalyzes the reversible adenylation of nicotinate mononucleotide (NaMN) to nicotinic acid adenine dinucleotide (NaAD). This chain is Probable nicotinate-nucleotide adenylyltransferase, found in Dehalococcoides mccartyi (strain ATCC BAA-2100 / JCM 16839 / KCTC 5957 / BAV1).